The chain runs to 236 residues: Heme oxygenase (236 aa).

Residue H17 coordinates heme b.

It belongs to the heme oxygenase family.

The protein localises to the plastid. It localises to the chloroplast. It catalyses the reaction heme b + 3 reduced [NADPH--hemoprotein reductase] + 3 O2 = biliverdin IXalpha + CO + Fe(2+) + 3 oxidized [NADPH--hemoprotein reductase] + 3 H2O + H(+). Its function is as follows. Catalyzes the opening of the heme ring with the release of iron. Key enzyme in the synthesis of the chromophoric part of the photosynthetic antennae. The sequence is that of Heme oxygenase (pbsA) from Porphyra purpurea (Red seaweed).